The following is a 153-amino-acid chain: 6,7-dimethyl-8-ribityllumazine synthase 1 (153 aa).

5-amino-6-(D-ribitylamino)uracil is bound by residues Phe-16, 50-52 (AYE), and 74-76 (CVI). 79 to 80 (ET) lines the (2S)-2-hydroxy-3-oxobutyl phosphate pocket. The active-site Proton donor is His-82. Phe-107 provides a ligand contact to 5-amino-6-(D-ribitylamino)uracil. Arg-121 serves as a coordination point for (2S)-2-hydroxy-3-oxobutyl phosphate.

The protein belongs to the DMRL synthase family.

It catalyses the reaction (2S)-2-hydroxy-3-oxobutyl phosphate + 5-amino-6-(D-ribitylamino)uracil = 6,7-dimethyl-8-(1-D-ribityl)lumazine + phosphate + 2 H2O + H(+). Its pathway is cofactor biosynthesis; riboflavin biosynthesis; riboflavin from 2-hydroxy-3-oxobutyl phosphate and 5-amino-6-(D-ribitylamino)uracil: step 1/2. Its function is as follows. Catalyzes the formation of 6,7-dimethyl-8-ribityllumazine by condensation of 5-amino-6-(D-ribitylamino)uracil with 3,4-dihydroxy-2-butanone 4-phosphate. This is the penultimate step in the biosynthesis of riboflavin. The sequence is that of 6,7-dimethyl-8-ribityllumazine synthase 1 from Caulobacter vibrioides (strain ATCC 19089 / CIP 103742 / CB 15) (Caulobacter crescentus).